A 62-amino-acid chain; its full sequence is Sperm protamine P1 (62 aa).

Residues 1–62 (MARYRRHSRS…RYSRRGRRRY (62 aa)) form a disordered region.

It belongs to the protamine P1 family. In terms of tissue distribution, testis.

It is found in the nucleus. Its subcellular location is the chromosome. Its function is as follows. Protamines substitute for histones in the chromatin of sperm during the haploid phase of spermatogenesis. They compact sperm DNA into a highly condensed, stable and inactive complex. The sequence is that of Sperm protamine P1 (PRM1) from Neophascogale lorentzii (Long-clawed marsupial mouse).